Here is a 131-residue protein sequence, read N- to C-terminus: L-ectoine synthase (131 aa).

Belongs to the ectoine synthase family.

The enzyme catalyses (2S)-4-acetamido-2-aminobutanoate = L-ectoine + H2O. It participates in amine and polyamine biosynthesis; ectoine biosynthesis; L-ectoine from L-aspartate 4-semialdehyde: step 3/3. Functionally, catalyzes the circularization of gamma-N-acetyl-alpha,gamma-diaminobutyric acid (ADABA) to ectoine (1,4,5,6-tetrahydro-2-methyl-4-pyrimidine carboxylic acid), which is an excellent osmoprotectant. The polypeptide is L-ectoine synthase (Nocardia farcinica (strain IFM 10152)).